The primary structure comprises 159 residues: Phosphopantetheine adenylyltransferase (159 aa).

Thr-9 serves as a coordination point for substrate. ATP contacts are provided by residues 9–10 (TF) and His-17. Positions 41, 73, and 87 each coordinate substrate. Residues 88 to 90 (GLR), Glu-98, and 123 to 129 (YSFISST) contribute to the ATP site.

Belongs to the bacterial CoaD family. Homohexamer. Requires Mg(2+) as cofactor.

Its subcellular location is the cytoplasm. The enzyme catalyses (R)-4'-phosphopantetheine + ATP + H(+) = 3'-dephospho-CoA + diphosphate. It participates in cofactor biosynthesis; coenzyme A biosynthesis; CoA from (R)-pantothenate: step 4/5. Reversibly transfers an adenylyl group from ATP to 4'-phosphopantetheine, yielding dephospho-CoA (dPCoA) and pyrophosphate. The polypeptide is Phosphopantetheine adenylyltransferase (Pseudomonas syringae pv. syringae (strain B728a)).